The chain runs to 357 residues: uncharacterized protein (357 aa).

An HEAT repeat occupies 173–211 (VLPILEKLMQDESLYVRKSVANNLNDISKTHPHLLRKVA).

This is an uncharacterized protein from Bacillus subtilis (strain 168).